Reading from the N-terminus, the 257-residue chain is uncharacterized protein (257 aa).

The first 22 residues, 1–22, serve as a signal peptide directing secretion; it reads MRYLKRLSWYISILILIVVIAG. The N-palmitoyl cysteine moiety is linked to residue C23. C23 carries S-diacylglycerol cysteine lipidation.

This sequence belongs to the staphylococcal tandem lipoprotein family.

The protein localises to the cell membrane. This is an uncharacterized protein from Staphylococcus aureus (strain N315).